A 170-amino-acid polypeptide reads, in one-letter code: MNLPLLATEGFGLNLNLFETNVLNWAVVVFGLYKFLPGFLGKMLQKRREGILLELKDAEDRLLKATQALEKAKTDLSLAEEKAGQIKADSLKRSESIRMESEKKAIEEMARIKQSAISDESSEASRAISQLRKEAVELAIKKALDSLPNRLDQTTQENLVTQSINNIEMN.

A helical membrane pass occupies residues 22–41 (VLNWAVVVFGLYKFLPGFLG).

It belongs to the ATPase B chain family. In terms of assembly, F-type ATPases have 2 components, F(1) - the catalytic core - and F(0) - the membrane proton channel. F(1) has five subunits: alpha(3), beta(3), gamma(1), delta(1), epsilon(1). F(0) has four main subunits: a(1), b(1), b'(1) and c(10-14). The alpha and beta chains form an alternating ring which encloses part of the gamma chain. F(1) is attached to F(0) by a central stalk formed by the gamma and epsilon chains, while a peripheral stalk is formed by the delta, b and b' chains.

It localises to the cellular thylakoid membrane. F(1)F(0) ATP synthase produces ATP from ADP in the presence of a proton or sodium gradient. F-type ATPases consist of two structural domains, F(1) containing the extramembraneous catalytic core and F(0) containing the membrane proton channel, linked together by a central stalk and a peripheral stalk. During catalysis, ATP synthesis in the catalytic domain of F(1) is coupled via a rotary mechanism of the central stalk subunits to proton translocation. In terms of biological role, component of the F(0) channel, it forms part of the peripheral stalk, linking F(1) to F(0). In Prochlorococcus marinus subsp. pastoris (strain CCMP1986 / NIES-2087 / MED4), this protein is ATP synthase subunit b.